Here is a 108-residue protein sequence, read N- to C-terminus: ATP synthase peripheral stalk subunit F6, mitochondrial (108 aa).

Residues 1–32 (MILQRLFRFSSVIRSAVSVHLRRNIGVTAVAF) constitute a mitochondrion transit peptide. Residues lysine 41 and lysine 46 each carry the N6-acetyllysine modification. Serine 65 bears the Phosphoserine mark. Lysine 79 is modified (N6-acetyllysine). 2 positions are modified to N6-acetyllysine; alternate: lysine 94 and lysine 99. 2 positions are modified to N6-succinyllysine; alternate: lysine 94 and lysine 99. Position 105 is an N6-acetyllysine (lysine 105).

The protein belongs to the eukaryotic ATPase subunit F6 family. As to quaternary structure, component of the ATP synthase complex composed at least of ATP5F1A/subunit alpha, ATP5F1B/subunit beta, ATP5MC1/subunit c (homooctomer), MT-ATP6/subunit a, MT-ATP8/subunit 8, ATP5ME/subunit e, ATP5MF/subunit f, ATP5MG/subunit g, ATP5MK/subunit k, ATP5MJ/subunit j, ATP5F1C/subunit gamma, ATP5F1D/subunit delta, ATP5F1E/subunit epsilon, ATP5PF/subunit F6, ATP5PB/subunit b, ATP5PD/subunit d, ATP5PO/subunit OSCP. ATP synthase complex consists of a soluble F(1) head domain (subunits alpha(3) and beta(3)) - the catalytic core - and a membrane F(0) domain - the membrane proton channel (subunits c, a, 8, e, f, g, k and j). These two domains are linked by a central stalk (subunits gamma, delta, and epsilon) rotating inside the F1 region and a stationary peripheral stalk (subunits F6, b, d, and OSCP).

The protein resides in the mitochondrion. The protein localises to the mitochondrion inner membrane. Functionally, subunit F6, of the mitochondrial membrane ATP synthase complex (F(1)F(0) ATP synthase or Complex V) that produces ATP from ADP in the presence of a proton gradient across the membrane which is generated by electron transport complexes of the respiratory chain. ATP synthase complex consist of a soluble F(1) head domain - the catalytic core - and a membrane F(1) domain - the membrane proton channel. These two domains are linked by a central stalk rotating inside the F(1) region and a stationary peripheral stalk. During catalysis, ATP synthesis in the catalytic domain of F(1) is coupled via a rotary mechanism of the central stalk subunits to proton translocation. In vivo, can only synthesize ATP although its ATP hydrolase activity can be activated artificially in vitro. Part of the complex F(0) domain. Part of the complex F(0) domain and the peripheric stalk, which acts as a stator to hold the catalytic alpha(3)beta(3) subcomplex and subunit a/ATP6 static relative to the rotary elements. In Homo sapiens (Human), this protein is ATP synthase peripheral stalk subunit F6, mitochondrial.